The sequence spans 231 residues: MIPSNKRNARILSITTLLLLLVFFVAQNANFLTVEIKEETSKAFSTNMDNMAGGSSREYAAMPTSTTNKGSSEVDEEINEIKQKVGLQQPIASVDDSLSAIKNDKGSRITKAFNVQKEYSLILDLSPIIIFSKSTCSYSKGMKELLENEYQFIPNYYIIELDKHGHGEELQEYIKLVTGRGTVPNLLVNGVSRGGNEEIKKLHTQGKLLESLQVWSDGKFSVEQREKPSNN.

The first 29 residues, 1 to 29 (MIPSNKRNARILSITTLLLLLVFFVAQNA), serve as a signal peptide directing secretion. The Glutaredoxin domain maps to 116-219 (QKEYSLILDL…ESLQVWSDGK (104 aa)). Cys136 is a binding site for [2Fe-2S] cluster.

Belongs to the glutaredoxin family. Monothiol subfamily.

The protein localises to the vacuole. This is Monothiol glutaredoxin-6 (GRX6) from Saccharomyces cerevisiae (strain ATCC 204508 / S288c) (Baker's yeast).